Here is a 388-residue protein sequence, read N- to C-terminus: Nesprin-4 (388 aa).

Residues 1–339 (MALVPPLGRE…GVPAPASKRP (339 aa)) lie on the Cytoplasmic side of the membrane. The tract at residues 60 to 92 (ELKSTESATSPSRLPLASSHEHQDGGKPCEHSD) is disordered. The segment covering 78-92 (SHEHQDGGKPCEHSD) has biased composition (basic and acidic residues). Positions 331–388 (VPAPASKRPLTLFFLLLFLLLVGATLLLPLSGVSCCSHARLARTPYLVLSYVNGLPPI) constitute a KASH domain. Residues 340–360 (LTLFFLLLFLLLVGATLLLPL) traverse the membrane as a helical; Anchor for type IV membrane protein segment. Residues 361-388 (SGVSCCSHARLARTPYLVLSYVNGLPPI) are Perinuclear space-facing.

Belongs to the nesprin family. Core component of LINC complexes which are composed of inner nuclear membrane SUN domain-containing proteins coupled to outer nuclear membrane KASH domain-containing nesprins. SUN and KASH domain-containing proteins seem to bind each other promiscuously; however, differentially expression of LINC complex constituents can give rise to specific assemblies. Probably part of a SUN1-containing LINC complex. Interacts with kinesins KIF5B and KLC1. In terms of processing, the disulfid bond with SUN1 or SUN2 is required for stability of the respective LINC complex under tensile forces. In terms of tissue distribution, expressed in secretory epithelial cells, such as those found in exocrine pancreas, bulbourethral gland, mammary gland and salivary gland (at protein level). Also expressed in the cochlea, where it is restricted primarily to the 3 rows of outer hair cells and 1 row of inner hair cells (at protein level). Not detected in other cells of the cochlea, including Deiter's cells and pillar cells, nor in liver and kidney (at protein level).

The protein resides in the nucleus outer membrane. In terms of biological role, as a component of the LINC (LInker of Nucleoskeleton and Cytoskeleton) complex, involved in the connection between the nuclear lamina and the cytoskeleton. The nucleocytoplasmic interactions established by the LINC complex play an important role in the transmission of mechanical forces across the nuclear envelope and in nuclear movement and positioning. Behaves as a kinesin cargo, providing a functional binding site for kinesin-1 at the nuclear envelope. Hence may contribute to the establishment of secretory epithelial morphology, by promoting kinesin-dependent apical migration of the centrosome and Golgi apparatus and basal localization of the nucleus. The chain is Nesprin-4 (Syne4) from Mus musculus (Mouse).